The following is a 90-amino-acid chain: DNA-directed RNA polymerase subunit omega (90 aa).

This sequence belongs to the RNA polymerase subunit omega family. In terms of assembly, the RNAP catalytic core consists of 2 alpha, 1 beta, 1 beta' and 1 omega subunit. When a sigma factor is associated with the core the holoenzyme is formed, which can initiate transcription.

It catalyses the reaction RNA(n) + a ribonucleoside 5'-triphosphate = RNA(n+1) + diphosphate. Promotes RNA polymerase assembly. Latches the N- and C-terminal regions of the beta' subunit thereby facilitating its interaction with the beta and alpha subunits. This chain is DNA-directed RNA polymerase subunit omega, found in Streptomyces griseus subsp. griseus (strain JCM 4626 / CBS 651.72 / NBRC 13350 / KCC S-0626 / ISP 5235).